The primary structure comprises 448 residues: Tryptophan dimethylallyltransferase 1 (448 aa).

L-tryptophan contacts are provided by residues 80–81 and Glu-89; that span reads IL. Positions 100, 186, and 188 each coordinate substrate. L-tryptophan contacts are provided by Tyr-190 and Arg-251. Substrate is bound by residues Arg-264, Lys-266, Tyr-268, Gln-350, Tyr-352, Tyr-416, and Tyr-420.

This sequence belongs to the tryptophan dimethylallyltransferase family. As to quaternary structure, homodimer.

It carries out the reaction L-tryptophan + dimethylallyl diphosphate = 4-(3-methylbut-2-enyl)-L-tryptophan + diphosphate. It functions in the pathway alkaloid biosynthesis; ergot alkaloid biosynthesis. Functionally, catalyzes the first step of ergot alkaloid biosynthesis. Ergot alkaloids, which are produced by endophyte fungi, can enhance plant host fitness, but also cause livestock toxicosis to host plants. The chain is Tryptophan dimethylallyltransferase 1 (dmaW1) from Epichloe coenophiala (Tall fescue endophyte fungus).